The following is a 362-amino-acid chain: Chorismate synthase (362 aa).

Residue Arg-48 coordinates NADP(+). FMN-binding positions include 131–133, 243–244, Gly-288, 303–307, and Arg-329; these read RAS, NA, and KPTSS.

Belongs to the chorismate synthase family. Homotetramer. FMNH2 is required as a cofactor.

The enzyme catalyses 5-O-(1-carboxyvinyl)-3-phosphoshikimate = chorismate + phosphate. It participates in metabolic intermediate biosynthesis; chorismate biosynthesis; chorismate from D-erythrose 4-phosphate and phosphoenolpyruvate: step 7/7. In terms of biological role, catalyzes the anti-1,4-elimination of the C-3 phosphate and the C-6 proR hydrogen from 5-enolpyruvylshikimate-3-phosphate (EPSP) to yield chorismate, which is the branch point compound that serves as the starting substrate for the three terminal pathways of aromatic amino acid biosynthesis. This reaction introduces a second double bond into the aromatic ring system. This Bartonella tribocorum (strain CIP 105476 / IBS 506) protein is Chorismate synthase.